The following is a 299-amino-acid chain: MAYERFTSAITLLLHWRNRLDPYWKLARGDRPVGFLLLLWPTWWALWLAADGVPPWWTLCVFTTGIWLTRSAGCVINDYTDRWLDPHVERTCTRPLVTGTVSPRNALLMFATLMLIAFGLVLTMNQLTVLLSVAGLFLAMTYPYLKRYTHLPQVYLGLAFGWGIPMAFAAIQGKVPTLAWLLYIANILWTTAYDTWYAMVDRDDDIKMGAKSIAILFAELDLVVQGVLYTLMLLTLCLVGLRATLSHTYWISLISAVALIGYQFIIARRREPTACFRAFMHNNWVGMTIFAGIALATTH.

A run of 8 helical transmembrane segments spans residues 33–53 (VGFL…ADGV), 56–76 (WWTL…GCVI), 107–127 (LLMF…MNQL), 151–171 (LPQV…FAAI), 180–200 (WLLY…YAMV), 213–233 (IAIL…TLML), 247–267 (HTYW…FIIA), and 278–298 (AFMH…LATT).

It belongs to the UbiA prenyltransferase family. Requires Mg(2+) as cofactor.

It localises to the cell inner membrane. It carries out the reaction all-trans-octaprenyl diphosphate + 4-hydroxybenzoate = 4-hydroxy-3-(all-trans-octaprenyl)benzoate + diphosphate. The protein operates within cofactor biosynthesis; ubiquinone biosynthesis. Functionally, catalyzes the prenylation of para-hydroxybenzoate (PHB) with an all-trans polyprenyl group. Mediates the second step in the final reaction sequence of ubiquinone-8 (UQ-8) biosynthesis, which is the condensation of the polyisoprenoid side chain with PHB, generating the first membrane-bound Q intermediate 3-octaprenyl-4-hydroxybenzoate. This chain is 4-hydroxybenzoate octaprenyltransferase, found in Xylella fastidiosa (strain M12).